A 912-amino-acid chain; its full sequence is WD repeat-containing protein 44 (912 aa).

Disordered regions lie at residues Asp206–Asp352, Ser399–Lys426, and Arg460–Tyr481. Pro residues predominate over residues Asn236–Pro258. Residues Gly264 to Lys278 show a composition bias toward basic and acidic residues. Residues Ser288–Ser311 show a composition bias toward polar residues. Over residues Lys410 to Lys422 the composition is skewed to basic and acidic residues. Residues Asp469–Gly478 show a composition bias toward acidic residues. One copy of the WD 1 repeat lies at Glu511–Asn550. The segment at Glu559–Lys594 is disordered. Positions Ser563–Lys575 are enriched in low complexity. WD repeat units follow at residues Gly608 to Cys646, Gln648 to Trp688, Gly693 to Gln732, Arg743 to Lys782, Val787 to Thr826, Ala841 to Pro880, and Gly882 to Ser912. The disordered stretch occupies residues Ala861–Gly882.

It localises to the cytoplasm. It is found in the cytosol. The protein resides in the perinuclear region. The protein localises to the endosome membrane. Its subcellular location is the golgi apparatus. It localises to the trans-Golgi network. Downstream effector for rab11. May be involved in vesicle recycling. May also be involved in the inhibition of the intracellular ciliogenesis pathway. The chain is WD repeat-containing protein 44 (wdr44) from Xenopus laevis (African clawed frog).